A 394-amino-acid polypeptide reads, in one-letter code: Alcohol dehydrogenase-like 3 (394 aa).

The Zn(2+) site is built by C48, T50, H71, C101, C104, C107, C115, and C188. An alcohol is bound by residues T50 and H71. T50 contacts NAD(+). NAD(+)-binding positions include 213–218 (GLGSVG), D237, K242, T283, V306, 306–308 (VGI), F333, and R383.

It belongs to the zinc-containing alcohol dehydrogenase family. Class-III subfamily. As to quaternary structure, homodimer. Zn(2+) is required as a cofactor.

It localises to the cytoplasm. It catalyses the reaction a primary alcohol + NAD(+) = an aldehyde + NADH + H(+). The enzyme catalyses a secondary alcohol + NAD(+) = a ketone + NADH + H(+). The protein is Alcohol dehydrogenase-like 3 of Arabidopsis thaliana (Mouse-ear cress).